A 111-amino-acid polypeptide reads, in one-letter code: Large ribosomal subunit protein P2 (111 aa).

The segment covering 63-84 (ASMPTGGAPAAAAGGAATAPAA) has biased composition (low complexity). Positions 63–111 (ASMPTGGAPAAAAGGAATAPAAEAKEAKKEEKKEESEEEDEDMGFGLFD) are disordered. Over residues 85–97 (EAKEAKKEEKKEE) the composition is skewed to basic and acidic residues. Position 98 is a phosphoserine (S98).

In terms of assembly, part of the ribosomal stalk of the large ribosomal subunit; P1 and P2 exist as dimers which assemble on the P0 scaffold.

Functionally, plays an important role in the elongation step of protein synthesis. The sequence is that of Large ribosomal subunit protein P2 from Artemia salina (Brine shrimp).